The chain runs to 265 residues: tRNA pseudouridine synthase A (265 aa).

The active-site Nucleophile is aspartate 53. Substrate is bound at residue tyrosine 111.

The protein belongs to the tRNA pseudouridine synthase TruA family. As to quaternary structure, homodimer.

The catalysed reaction is uridine(38/39/40) in tRNA = pseudouridine(38/39/40) in tRNA. Formation of pseudouridine at positions 38, 39 and 40 in the anticodon stem and loop of transfer RNAs. This Acinetobacter baumannii (strain ACICU) protein is tRNA pseudouridine synthase A.